The sequence spans 178 residues: Nicotinamide-nucleotide adenylyltransferase (178 aa).

Belongs to the archaeal NMN adenylyltransferase family.

It is found in the cytoplasm. The enzyme catalyses beta-nicotinamide D-ribonucleotide + ATP + H(+) = diphosphate + NAD(+). Its pathway is cofactor biosynthesis; NAD(+) biosynthesis; NAD(+) from nicotinamide D-ribonucleotide: step 1/1. The sequence is that of Nicotinamide-nucleotide adenylyltransferase from Pyrobaculum aerophilum (strain ATCC 51768 / DSM 7523 / JCM 9630 / CIP 104966 / NBRC 100827 / IM2).